A 311-amino-acid polypeptide reads, in one-letter code: D-alanine--D-alanine ligase (311 aa).

Residues 105–306 (KQLYIHAGLP…FSALLDRLIE (202 aa)) form the ATP-grasp domain. An ATP-binding site is contributed by 133-188 (ADRLGLPVVVKPEHEGSSIGLSIVRNRDQLAAAVETGWQYDRRCLIEKYVHGIEIT). The Mg(2+) site is built by Asp261, Glu273, and Asn275.

It belongs to the D-alanine--D-alanine ligase family. The cofactor is Mg(2+). Requires Mn(2+) as cofactor.

The protein localises to the cytoplasm. It carries out the reaction 2 D-alanine + ATP = D-alanyl-D-alanine + ADP + phosphate + H(+). Its pathway is cell wall biogenesis; peptidoglycan biosynthesis. Cell wall formation. The sequence is that of D-alanine--D-alanine ligase from Syntrophobacter fumaroxidans (strain DSM 10017 / MPOB).